The primary structure comprises 222 residues: uncharacterized protein (222 aa).

Positions 43–73 form a coiled coil; sequence SQNEEFEYEMERMLSILNEQTMDLTQLQSRI.

This is an uncharacterized protein from Rickettsia conorii (strain ATCC VR-613 / Malish 7).